Here is a 122-residue protein sequence, read N- to C-terminus: Large ribosomal subunit protein uL18 (122 aa).

Belongs to the universal ribosomal protein uL18 family. Part of the 50S ribosomal subunit; part of the 5S rRNA/L5/L18/L25 subcomplex. Contacts the 5S and 23S rRNAs.

This is one of the proteins that bind and probably mediate the attachment of the 5S RNA into the large ribosomal subunit, where it forms part of the central protuberance. This Buchnera aphidicola subsp. Acyrthosiphon pisum (strain 5A) protein is Large ribosomal subunit protein uL18.